Reading from the N-terminus, the 561-residue chain is Putative transport protein KPK_3686 (561 aa).

5 consecutive transmembrane segments (helical) span residues 8–28 (LLNG…LCLG), 37–57 (LGNS…HFAI), 66–86 (FMLF…SIFF), 94–114 (MLAL…GKVF), and 158–178 (HLSL…IVGA). RCK C-terminal domains follow at residues 202 to 288 (LDTD…SFRN) and 292 to 373 (VFDR…RIGF). The next 5 helical transmembrane spans lie at 383-403 (LLAF…TFQF), 406-426 (FSFG…LGFL), 447-467 (FGLM…INNG), 478-498 (AGLI…AYVL), and 540-560 (AIAN…WPGL).

This sequence belongs to the AAE transporter (TC 2.A.81) family. YbjL subfamily.

The protein resides in the cell membrane. This chain is Putative transport protein KPK_3686, found in Klebsiella pneumoniae (strain 342).